The sequence spans 117 residues: Ribonuclease P protein component (117 aa).

The protein belongs to the RnpA family. Consists of a catalytic RNA component (M1 or rnpB) and a protein subunit.

It carries out the reaction Endonucleolytic cleavage of RNA, removing 5'-extranucleotides from tRNA precursor.. In terms of biological role, RNaseP catalyzes the removal of the 5'-leader sequence from pre-tRNA to produce the mature 5'-terminus. It can also cleave other RNA substrates such as 4.5S RNA. The protein component plays an auxiliary but essential role in vivo by binding to the 5'-leader sequence and broadening the substrate specificity of the ribozyme. The sequence is that of Ribonuclease P protein component from Staphylococcus aureus (strain MW2).